The chain runs to 592 residues: Aspartate--tRNA(Asp/Asn) ligase (592 aa).

E173 contacts L-aspartate. An aspartate region spans residues 197 to 200 (QLFK). R219 is an L-aspartate binding site. ATP-binding positions include 219–221 (RDE) and Q228. H448 serves as a coordination point for L-aspartate. Position 481 (E481) interacts with ATP. Residue R488 coordinates L-aspartate. 533–536 (GLDR) is an ATP binding site.

Belongs to the class-II aminoacyl-tRNA synthetase family. Type 1 subfamily. In terms of assembly, homodimer.

The protein localises to the cytoplasm. The enzyme catalyses tRNA(Asx) + L-aspartate + ATP = L-aspartyl-tRNA(Asx) + AMP + diphosphate. Its function is as follows. Aspartyl-tRNA synthetase with relaxed tRNA specificity since it is able to aspartylate not only its cognate tRNA(Asp) but also tRNA(Asn). Reaction proceeds in two steps: L-aspartate is first activated by ATP to form Asp-AMP and then transferred to the acceptor end of tRNA(Asp/Asn). This Chromohalobacter salexigens (strain ATCC BAA-138 / DSM 3043 / CIP 106854 / NCIMB 13768 / 1H11) protein is Aspartate--tRNA(Asp/Asn) ligase.